A 783-amino-acid polypeptide reads, in one-letter code: Polyadenylate-binding protein, cytoplasmic and nuclear (783 aa).

Residues 16–65 (DLGNTSLGGGDNRAAPAINTNVAPGEYQTADPDTAGPTPSSAAPHPQSSA) are disordered. Residues 54–65 (PSSAAPHPQSSA) show a composition bias toward low complexity. RRM domains are found at residues 65-143 (ASLY…WSQR), 153-230 (GNVF…YHIP), 246-323 (TNIY…RAQK), and 349-471 (VNLY…LAQR). Disordered stretches follow at residues 381–428 (MRDA…KGDR), 596–671 (AAAL…AAGG), and 752–783 (VKSQ…EEKA). Over residues 396-406 (GKDKENKKEGE) the composition is skewed to basic and acidic residues. Residues 407-416 (QAAEAEGEAE) are compositionally biased toward acidic residues. The span at 417–428 (GAEKKTEKKGDR) shows a compositional bias: basic and acidic residues. Residues 601-614 (NGRGGPGGPGGRGM) are compositionally biased toward gly residues. Residues 630–641 (AGFPPNGRPQNG) show a composition bias toward low complexity. A compositionally biased stretch (gly residues) spans 642 to 655 (NMGGRGGPGRGGNF). Low complexity predominate over residues 656-671 (AAGRGAPPAGPLAAGG). In terms of domain architecture, PABC spans 676–753 (SSLLQSQLTA…AMAVYDEYVK (78 aa)). The span at 770–783 (EAEKPKEEKAEEKA) shows a compositional bias: basic and acidic residues.

Belongs to the polyadenylate-binding protein type-1 family.

The protein localises to the cytoplasm. It is found in the nucleus. Its function is as follows. Binds the poly(A) tail of mRNA. Appears to be an important mediator of the multiple roles of the poly(A) tail in mRNA biogenesis, stability and translation. In the nucleus, involved in both mRNA cleavage and polyadenylation. Is also required for efficient mRNA export to the cytoplasm. Acts in concert with a poly(A)-specific nuclease (PAN) to affect poly(A) tail shortening, which may occur concomitantly with either nucleocytoplasmic mRNA transport or translational initiation. In the cytoplasm, stimulates translation initiation and regulates mRNA decay through translation termination-coupled poly(A) shortening, probably mediated by PAN. This chain is Polyadenylate-binding protein, cytoplasmic and nuclear (PAB1), found in Chaetomium globosum (strain ATCC 6205 / CBS 148.51 / DSM 1962 / NBRC 6347 / NRRL 1970) (Soil fungus).